Here is a 62-residue protein sequence, read N- to C-terminus: Photosystem II reaction center protein Z (62 aa).

A run of 2 helical transmembrane segments spans residues 8–28 (SVFA…VVLA) and 41–61 (FSGA…NSFI).

Belongs to the PsbZ family. In terms of assembly, PSII is composed of 1 copy each of membrane proteins PsbA, PsbB, PsbC, PsbD, PsbE, PsbF, PsbH, PsbI, PsbJ, PsbK, PsbL, PsbM, PsbT, PsbY, PsbZ, Psb30/Ycf12, at least 3 peripheral proteins of the oxygen-evolving complex and a large number of cofactors. It forms dimeric complexes.

It is found in the plastid. It localises to the chloroplast thylakoid membrane. May control the interaction of photosystem II (PSII) cores with the light-harvesting antenna, regulates electron flow through the 2 photosystem reaction centers. PSII is a light-driven water plastoquinone oxidoreductase, using light energy to abstract electrons from H(2)O, generating a proton gradient subsequently used for ATP formation. This Chaetosphaeridium globosum (Charophycean green alga) protein is Photosystem II reaction center protein Z.